A 261-amino-acid chain; its full sequence is Adenosylcobinamide-GDP ribazoletransferase (261 aa).

Helical transmembrane passes span 31–51, 59–79, 125–145, 183–203, and 240–260; these read YAICFFPLIGAVIGGVFFLTF, LGDILIAALLTSIPILISGGI, FGMVSVLTLKSSIIIAIFFVV, VIYLVITVIGMLLVSPILTVV, and LMAGLAVVIAEGVIIYGTGHW.

This sequence belongs to the CobS family. The cofactor is Mg(2+).

The protein resides in the cell membrane. The enzyme catalyses alpha-ribazole + adenosylcob(III)inamide-GDP = adenosylcob(III)alamin + GMP + H(+). It catalyses the reaction alpha-ribazole 5'-phosphate + adenosylcob(III)inamide-GDP = adenosylcob(III)alamin 5'-phosphate + GMP + H(+). Its pathway is cofactor biosynthesis; adenosylcobalamin biosynthesis; adenosylcobalamin from cob(II)yrinate a,c-diamide: step 7/7. Functionally, joins adenosylcobinamide-GDP and alpha-ribazole to generate adenosylcobalamin (Ado-cobalamin). Also synthesizes adenosylcobalamin 5'-phosphate from adenosylcobinamide-GDP and alpha-ribazole 5'-phosphate. The protein is Adenosylcobinamide-GDP ribazoletransferase of Lachnoclostridium phytofermentans (strain ATCC 700394 / DSM 18823 / ISDg) (Clostridium phytofermentans).